Here is a 1141-residue protein sequence, read N- to C-terminus: Isoleucine--tRNA ligase (1141 aa).

The short motif at 50–60 (PSANGMPGIHH) is the 'HIGH' region element. A 'KMSKS' region motif is present at residues 689–693 (KMSKR). Lys-692 serves as a coordination point for ATP.

Belongs to the class-I aminoacyl-tRNA synthetase family. IleS type 2 subfamily. Monomer. The cofactor is Zn(2+).

The protein resides in the cytoplasm. The enzyme catalyses tRNA(Ile) + L-isoleucine + ATP = L-isoleucyl-tRNA(Ile) + AMP + diphosphate. Catalyzes the attachment of isoleucine to tRNA(Ile). As IleRS can inadvertently accommodate and process structurally similar amino acids such as valine, to avoid such errors it has two additional distinct tRNA(Ile)-dependent editing activities. One activity is designated as 'pretransfer' editing and involves the hydrolysis of activated Val-AMP. The other activity is designated 'posttransfer' editing and involves deacylation of mischarged Val-tRNA(Ile). The protein is Isoleucine--tRNA ligase of Bacteroides fragilis (strain ATCC 25285 / DSM 2151 / CCUG 4856 / JCM 11019 / LMG 10263 / NCTC 9343 / Onslow / VPI 2553 / EN-2).